The following is a 984-amino-acid chain: Putative formate dehydrogenase SA2102 (984 aa).

The 2Fe-2S ferredoxin-type domain maps to 3–79 (EHLVVTLDGK…PMTVNTVNND (77 aa)). The [2Fe-2S] cluster site is built by Cys-37, Cys-48, Cys-51, and Cys-63. The region spanning 79-119 (DVKDAQKEALDRILEKHMLYCTVCDYNNGDCEIHNTMDAWG) is the 4Fe-4S His(Cys)3-ligated-type domain. [4Fe-4S] cluster contacts are provided by His-95, Cys-99, Cys-102, Cys-109, Cys-147, Cys-150, Cys-153, Cys-157, Cys-190, Cys-193, Cys-196, Cys-200, Cys-264, Cys-267, Cys-271, and Cys-299. 4Fe-4S ferredoxin-type domains are found at residues 138–165 (PFYRYDPNQCILCGRCVEACQDIEVNET) and 181–211 (NDVPINESSCVSCGQCATVCPCNAMMEVNME). Residues 252–984 (MRKERIKKTK…YVFPGNQVDK (733 aa)) form a formate dehydrogenase region. The 57-residue stretch at 257 to 313 (IKKTKTVCTYCGVGCSFEVWTKDREILKVQPSHDSPANKIATCVKGKFSWGHINSDQ) folds into the 4Fe-4S Mo/W bis-MGD-type domain.

It in the C-terminal section; belongs to the prokaryotic molybdopterin-containing oxidoreductase family. The cofactor is [2Fe-2S] cluster. It depends on [4Fe-4S] cluster as a cofactor. Mo-bis(molybdopterin guanine dinucleotide) serves as cofactor.

The catalysed reaction is formate + NAD(+) = CO2 + NADH. In Staphylococcus aureus (strain N315), this protein is Putative formate dehydrogenase SA2102.